Consider the following 123-residue polypeptide: U9-barytoxin-Tl1a (123 aa).

Residues 1–18 form the signal peptide; the sequence is MNTMITFLVLFVLTAANG. Positions 19 to 77 are excised as a propeptide; sequence APEANERKIPEAIHNEDQSLAEMAEELMFFLQQTEFEAPLLQEEEEAEXAEXRNSRERR. Intrachain disulfides connect Cys78/Cys93, Cys85/Cys98, and Cys92/Cys112.

It belongs to the neurotoxin 14 (magi-1) family. 05 (ICK-7) subfamily. ICK-7 sub-subfamily. Expressed by the venom gland.

It localises to the secreted. Ion channel inhibitor. In Trittame loki (Brush-footed trapdoor spider), this protein is U9-barytoxin-Tl1a.